The primary structure comprises 122 residues: Large ribosomal subunit protein uL14 (122 aa).

The protein belongs to the universal ribosomal protein uL14 family. As to quaternary structure, part of the 50S ribosomal subunit. Forms a cluster with proteins L3 and L19. In the 70S ribosome, L14 and L19 interact and together make contacts with the 16S rRNA in bridges B5 and B8.

Its function is as follows. Binds to 23S rRNA. Forms part of two intersubunit bridges in the 70S ribosome. This chain is Large ribosomal subunit protein uL14, found in Ligilactobacillus salivarius (strain UCC118) (Lactobacillus salivarius).